The following is a 336-amino-acid chain: Ribosomal RNA large subunit methyltransferase F (336 aa).

Over residues 212-231 the composition is skewed to basic residues; it reads HHLERSRGKPTGKGVRRVRS. The tract at residues 212–234 is disordered; the sequence is HHLERSRGKPTGKGVRRVRSGRM.

The protein belongs to the methyltransferase superfamily. METTL16/RlmF family.

It is found in the cytoplasm. It catalyses the reaction adenosine(1618) in 23S rRNA + S-adenosyl-L-methionine = N(6)-methyladenosine(1618) in 23S rRNA + S-adenosyl-L-homocysteine + H(+). Functionally, specifically methylates the adenine in position 1618 of 23S rRNA. The chain is Ribosomal RNA large subunit methyltransferase F from Methylobacillus flagellatus (strain ATCC 51484 / DSM 6875 / VKM B-1610 / KT).